We begin with the raw amino-acid sequence, 256 residues long: Post-translational flagellin modification protein A (256 aa).

Residue Ser145 participates in substrate binding. The active-site Proton acceptor is the Tyr168.

It belongs to the short-chain dehydrogenases/reductases (SDR) family.

In terms of biological role, required for biosynthesis of LAH modification in the post-translational modification of Campylobacter coli flagellin. The sequence is that of Post-translational flagellin modification protein A (ptmA) from Campylobacter coli.